A 224-amino-acid chain; its full sequence is MAEQSAGGQGAPEGRDSRDSREGRGRRDGGRGGRDSDKSNYLERVVAINRVSKVVKGGRRFSFTALVIVGDGNGMVGVGYGKAKEVPAAIAKGVEEARKGFFRVPLIGGTITHPVQGEAAAGVVLLRPASPGTGVLAGGAARAVLECAGVHDILAKSLGSDNAINVVHATVAALKMLQRPEEVAARRGLPIEDVAPAGMLKARRESEALAAAAVREAQTSGAQP.

The segment at 1-38 (MAEQSAGGQGAPEGRDSRDSREGRGRRDGGRGGRDSDK) is disordered. Positions 13–38 (EGRDSRDSREGRGRRDGGRGGRDSDK) are enriched in basic and acidic residues. The S5 DRBM domain occupies 41–104 (YLERVVAINR…EEARKGFFRV (64 aa)).

The protein belongs to the universal ribosomal protein uS5 family. In terms of assembly, part of the 30S ribosomal subunit. Contacts proteins S4 and S8.

Its function is as follows. With S4 and S12 plays an important role in translational accuracy. Functionally, located at the back of the 30S subunit body where it stabilizes the conformation of the head with respect to the body. The sequence is that of Small ribosomal subunit protein uS5 from Mycobacterium ulcerans (strain Agy99).